The chain runs to 181 residues: Protein Syd (181 aa).

Belongs to the Syd family.

The protein localises to the cell inner membrane. Interacts with the SecY protein in vivo. May bind preferentially to an uncomplexed state of SecY, thus functioning either as a chelating agent for excess SecY in the cell or as a regulatory factor that negatively controls the translocase function. The chain is Protein Syd from Escherichia coli O17:K52:H18 (strain UMN026 / ExPEC).